Here is a 1493-residue protein sequence, read N- to C-terminus: Pleckstrin homology domain-containing family H member 2 (1493 aa).

Positions 20–175 form a coiled coil; the sequence is LESQLMKFRV…LQEVQGKKSS (156 aa). 4 disordered regions span residues 202 to 230, 245 to 335, 363 to 439, and 613 to 705; these read SPPQ…DMEE, NNRG…SSSI, LNSP…LPPP, and SSSP…EPLE. Residues 208–230 show a composition bias toward basic and acidic residues; the sequence is KSEEMSKISSKEPEFTEGKDMEE. 2 stretches are compositionally biased toward polar residues: residues 245 to 260 and 267 to 281; these read NNRG…CGSE and TSFA…NSGA. The segment covering 374 to 388 has biased composition (basic and acidic residues); it reads LSKKEQDSSSDELNK. Polar residues-rich tracts occupy residues 389 to 409, 421 to 432, and 676 to 698; these read KFQS…TPSP, NSLSGKGTQLVP, and STDT…SSDN. PH domains lie at 703–797 and 811–919; these read PLEK…NVLR and KPTM…VAAG. The 156-residue stretch at 955-1110 folds into the MyTH4 domain; sequence HSKEGIISPL…PSRMEILSTL (156 aa). The 331-residue stretch at 1121–1451 folds into the FERM domain; the sequence is FSIPVHFMNG…SYINNFHQQK (331 aa). The disordered stretch occupies residues 1474 to 1493; it reads MMGSQPLLSSSRPTKGPTLL.

Self-associates. Interacts with TGFB1I1. Kidney. Reduced expression in patients with focal segmental glomerulosclerosis.

It localises to the cytoplasm. The protein localises to the cytoskeleton. It is found in the cell membrane. Its subcellular location is the cell projection. The protein resides in the lamellipodium. Its function is as follows. In the kidney glomerulus may play a role in linking podocyte foot processes to the glomerular basement membrane. May be involved in stabilization of F-actin by attenuating its depolymerization. Can recruit TGFB1I1 from focal adhesions to podocyte lamellipodia. The polypeptide is Pleckstrin homology domain-containing family H member 2 (PLEKHH2) (Homo sapiens (Human)).